The following is a 303-amino-acid chain: Protease HtpX homolog (303 aa).

A run of 2 helical transmembrane segments spans residues 4–24 (VVLF…TARI) and 38–58 (MGML…ISLL). Residue H144 participates in Zn(2+) binding. The active site involves E145. H148 provides a ligand contact to Zn(2+). The next 2 membrane-spanning stretches (helical) occupy residues 152–172 (GDMV…IFLS) and 199–219 (ISSI…VMYF). E224 contributes to the Zn(2+) binding site.

Belongs to the peptidase M48B family. Zn(2+) serves as cofactor.

Its subcellular location is the cell inner membrane. This Chlorobium phaeobacteroides (strain BS1) protein is Protease HtpX homolog.